A 149-amino-acid chain; its full sequence is Nucleoside diphosphate kinase (149 aa).

The ATP site is built by Lys-9, Phe-57, Arg-85, Thr-91, Arg-102, and Asn-112. His-115 functions as the Pros-phosphohistidine intermediate in the catalytic mechanism.

The protein belongs to the NDK family. In terms of assembly, homotetramer. Requires Mg(2+) as cofactor.

The protein localises to the cytoplasm. The enzyme catalyses a 2'-deoxyribonucleoside 5'-diphosphate + ATP = a 2'-deoxyribonucleoside 5'-triphosphate + ADP. It carries out the reaction a ribonucleoside 5'-diphosphate + ATP = a ribonucleoside 5'-triphosphate + ADP. Its function is as follows. Major role in the synthesis of nucleoside triphosphates other than ATP. The ATP gamma phosphate is transferred to the NDP beta phosphate via a ping-pong mechanism, using a phosphorylated active-site intermediate. This Synechocystis sp. (strain ATCC 27184 / PCC 6803 / Kazusa) protein is Nucleoside diphosphate kinase.